The sequence spans 158 residues: Troponin C, isoform 1 (158 aa).

S1 bears the N-acetylserine mark. 4 consecutive EF-hand domains span residues 15–50, 51–86, 91–126, and 127–158; these read EQIVVLRRAFDSFDRDKKGYISPETVSDILRMMGIK, VSSTSFKQIIEEIDEDGSGQIEFSEFLQLAAKFLIE, AMMKELKEAFRLYDKEGNGYITTQTLKEILHELDAR, and LTAEELVGIIEEIDEDGSGTVDFDEFMAMMTG. Residues D64, D66, S68, Q70, and E75 each coordinate Ca(2+). Residues D140, D142, S144, T146, and E151 each contribute to the Ca(2+) site.

The protein belongs to the troponin C family.

In terms of biological role, troponin is the central regulatory protein of striated muscle contraction. Tn consists of three components: Tn-I which is the inhibitor of actomyosin ATPase, Tn-T which contains the binding site for tropomyosin and Tn-C. The binding of calcium to Tn-C abolishes the inhibitory action of Tn on actin filaments. The polypeptide is Troponin C, isoform 1 (Balanus nubilus (Giant acorn barnacle)).